The primary structure comprises 64 residues: Large ribosomal subunit protein bL32 (64 aa).

Belongs to the bacterial ribosomal protein bL32 family.

The sequence is that of Large ribosomal subunit protein bL32 from Flavobacterium psychrophilum (strain ATCC 49511 / DSM 21280 / CIP 103535 / JIP02/86).